The chain runs to 306 residues: Curved DNA-binding protein (306 aa).

In terms of domain architecture, J spans 5–69 (DYYAIMGVKP…QRRAEYDQMW (65 aa)).

The protein localises to the cytoplasm. Its subcellular location is the nucleoid. Functionally, DNA-binding protein that preferentially recognizes a curved DNA sequence. It is probably a functional analog of DnaJ; displays overlapping activities with DnaJ, but functions under different conditions, probably acting as a molecular chaperone in an adaptive response to environmental stresses other than heat shock. Lacks autonomous chaperone activity; binds native substrates and targets them for recognition by DnaK. Its activity is inhibited by the binding of CbpM. This Escherichia coli O157:H7 protein is Curved DNA-binding protein.